Here is a 229-residue protein sequence, read N- to C-terminus: GTP-binding protein Di-Ras3 (229 aa).

GTP-binding positions include 44–51 (GTAGVGKS), 63–69 (RHEYLPT), 91–95 (DSKSG), 152–155 (NKSD), and 182–183 (AK). An Effector region motif is present at residues 66 to 74 (YLPTIENTY). At Cys226 the chain carries Cysteine methyl ester. Cys226 carries S-geranylgeranyl cysteine lipidation. Residues 227–229 (IIM) constitute a propeptide, removed in mature form.

The protein belongs to the small GTPase superfamily. Di-Ras family. In terms of tissue distribution, expressed in normal ovarian and breast epithelial cells but not in ovarian and breast cancers.

It is found in the cell membrane. The polypeptide is GTP-binding protein Di-Ras3 (DIRAS3) (Homo sapiens (Human)).